Here is a 450-residue protein sequence, read N- to C-terminus: NADP-specific glutamate dehydrogenase (450 aa).

Residue Lys-111 is part of the active site.

This sequence belongs to the Glu/Leu/Phe/Val dehydrogenases family. In terms of assembly, homohexamer.

The enzyme catalyses L-glutamate + NADP(+) + H2O = 2-oxoglutarate + NH4(+) + NADPH + H(+). This Hebeloma cylindrosporum protein is NADP-specific glutamate dehydrogenase.